Reading from the N-terminus, the 535-residue chain is Peptide chain release factor 3 (535 aa).

The 269-residue stretch at 8 to 276 (ARRRTFAIIS…ALVDLAPQPG (269 aa)) folds into the tr-type G domain. Residues 17–24 (SHPDAGKT), 85–89 (DTPGH), and 139–142 (NKMD) contribute to the GTP site.

This sequence belongs to the TRAFAC class translation factor GTPase superfamily. Classic translation factor GTPase family. PrfC subfamily.

It localises to the cytoplasm. Increases the formation of ribosomal termination complexes and stimulates activities of RF-1 and RF-2. It binds guanine nucleotides and has strong preference for UGA stop codons. It may interact directly with the ribosome. The stimulation of RF-1 and RF-2 is significantly reduced by GTP and GDP, but not by GMP. This chain is Peptide chain release factor 3, found in Bordetella avium (strain 197N).